The primary structure comprises 227 residues: tRNA (guanine-N(1)-)-methyltransferase (227 aa).

S-adenosyl-L-methionine-binding positions include Gly-112 and 132–137 (LGDFVL).

The protein belongs to the RNA methyltransferase TrmD family. As to quaternary structure, homodimer.

It localises to the cytoplasm. It catalyses the reaction guanosine(37) in tRNA + S-adenosyl-L-methionine = N(1)-methylguanosine(37) in tRNA + S-adenosyl-L-homocysteine + H(+). In terms of biological role, specifically methylates guanosine-37 in various tRNAs. The chain is tRNA (guanine-N(1)-)-methyltransferase from Gloeobacter violaceus (strain ATCC 29082 / PCC 7421).